Consider the following 979-residue polypeptide: Protein argonaute PNH1 (979 aa).

Residues 1 to 95 are disordered; sequence MLEVLDMAPP…GGRAGAGPGP (95 aa). The span at 54–67 shows a compositional bias: low complexity; the sequence is AETAAATAAVAPPE. The segment covering 77 to 86 has biased composition (basic residues); the sequence is GRRRGGRGRG. A PAZ domain is found at 333–446; the sequence is PVIEFVAQIL…LPMEACKIVE (114 aa). One can recognise a Piwi domain in the interval 620–941; it reads LLLAILPDNN…AAFRARFYME (322 aa).

This sequence belongs to the argonaute family. Ago subfamily.

It localises to the cytoplasm. Its function is as follows. Probably involved in the RNA silencing pathway. May bind to short RNAs such as microRNAs (miRNAs) or short interfering RNAs (siRNAs), and represses the translation of mRNAs which are complementary to them. Plays a role in the maintenance of the indeterminate state of the stem cells in the shoot apical meristem (SAM). Regulates leaf formation through vascular development and may be involved in determining the central domain of the leaf founder region. In Oryza sativa subsp. japonica (Rice), this protein is Protein argonaute PNH1 (PHN1).